The following is a 115-amino-acid chain: Pancreatic progenitor cell differentiation and proliferation factor B (115 aa).

Residues 21–48 (IGSTSSSSSCGSSEYSGEVIPHHPGLPK) are disordered. A compositionally biased stretch (low complexity) spans 22–37 (GSTSSSSSCGSSEYSG).

The protein belongs to the PPDPF family.

Its function is as follows. Probable regulator of exocrine pancreas development. The polypeptide is Pancreatic progenitor cell differentiation and proliferation factor B (ppdpfb) (Danio rerio (Zebrafish)).